A 164-amino-acid polypeptide reads, in one-letter code: Small ribosomal subunit protein uS9 (164 aa).

It belongs to the universal ribosomal protein uS9 family.

This chain is Small ribosomal subunit protein uS9, found in Rickettsia bellii (strain OSU 85-389).